Reading from the N-terminus, the 198-residue chain is 3-isopropylmalate dehydratase small subunit (198 aa).

It belongs to the LeuD family. LeuD type 1 subfamily. In terms of assembly, heterodimer of LeuC and LeuD.

The catalysed reaction is (2R,3S)-3-isopropylmalate = (2S)-2-isopropylmalate. Its pathway is amino-acid biosynthesis; L-leucine biosynthesis; L-leucine from 3-methyl-2-oxobutanoate: step 2/4. Catalyzes the isomerization between 2-isopropylmalate and 3-isopropylmalate, via the formation of 2-isopropylmaleate. The protein is 3-isopropylmalate dehydratase small subunit of Colwellia psychrerythraea (strain 34H / ATCC BAA-681) (Vibrio psychroerythus).